A 172-amino-acid polypeptide reads, in one-letter code: MNEKYPIGEFQFDGEITNIIINEWINEIEDLPRLLKNTVIDLNNEQLDTSYRSGGWTVRQVIHHLADSHMNAYIRLKLAITEENPVIKPYDEKEWAELYDYNLPIEISLSLIEALHKRWCSLLRDLSPTDMERTFKHPESGSISIGKNIGIYAWHGKHHLAHITSLCKRKDW.

Positions 64, 155, and 159 each coordinate Zn(2+).

It belongs to the metal hydrolase YfiT family. In terms of assembly, homodimer. Zn(2+) serves as cofactor.

The protein resides in the cytoplasm. In terms of biological role, possible metal-dependent hydrolase. This is Putative metal-dependent hydrolase OB0782 from Oceanobacillus iheyensis (strain DSM 14371 / CIP 107618 / JCM 11309 / KCTC 3954 / HTE831).